Here is an 831-residue protein sequence, read N- to C-terminus: Cation/H(+) symporter 13 (831 aa).

Transmembrane regions (helical) follow at residues 50–70, 89–109, 112–132, 147–167, 214–234, 250–270, 282–302, 303–323, 334–354, 364–384, 397–417, and 430–450; these read YALP…RLIF, VVLG…FLPA, KIII…LLGL, ILIG…TIMF, LATH…LAFN, MIIG…VWLT, VVPF…GEAM, GVHA…GPPL, FASN…TNFF, VVMI…GTAA, LCLA…TIVW, and LVII…VYLY.

The protein belongs to the monovalent cation:proton antiporter 2 (CPA2) transporter (TC 2.A.37) family. CHX (TC 2.A.37.4) subfamily. Preferentially expressed in pollen before and after germination. Detected in pollen grains within anthers of the flower buds or in pollen on fully open flowers and on the stigma, and in pollen tubes growing in the style. Weakly expressed in roots.

Its subcellular location is the cell membrane. Functionally, high-affinity potassium transporter that plays a role in K(+) acquisition. May operate as a K(+)/H(+) symporter. The sequence is that of Cation/H(+) symporter 13 (CHX13) from Arabidopsis thaliana (Mouse-ear cress).